Reading from the N-terminus, the 260-residue chain is Proteasome subunit alpha 1 (260 aa).

Positions 237 to 260 are disordered; sequence AEADLLDTGEDADDEAEDEDATEE. Residues 240–260 show a composition bias toward acidic residues; sequence DLLDTGEDADDEAEDEDATEE.

Belongs to the peptidase T1A family. As to quaternary structure, the 20S proteasome core is composed of 14 alpha and 14 beta subunits that assemble into four stacked heptameric rings, resulting in a barrel-shaped structure. The two inner rings, each composed of seven catalytic beta subunits, are sandwiched by two outer rings, each composed of seven alpha subunits. The catalytic chamber with the active sites is on the inside of the barrel. Has a gated structure, the ends of the cylinder being occluded by the N-termini of the alpha-subunits. Is capped at one or both ends by the proteasome regulatory ATPase, PAN.

Its subcellular location is the cytoplasm. Its activity is regulated as follows. The formation of the proteasomal ATPase PAN-20S proteasome complex, via the docking of the C-termini of PAN into the intersubunit pockets in the alpha-rings, triggers opening of the gate for substrate entry. Interconversion between the open-gate and close-gate conformations leads to a dynamic regulation of the 20S proteasome proteolysis activity. In terms of biological role, component of the proteasome core, a large protease complex with broad specificity involved in protein degradation. In Haloarcula marismortui (strain ATCC 43049 / DSM 3752 / JCM 8966 / VKM B-1809) (Halobacterium marismortui), this protein is Proteasome subunit alpha 1.